The chain runs to 177 residues: Large ribosomal subunit protein uL16 (177 aa).

Belongs to the universal ribosomal protein uL16 family.

The chain is Large ribosomal subunit protein uL16 from Natronomonas pharaonis (strain ATCC 35678 / DSM 2160 / CIP 103997 / JCM 8858 / NBRC 14720 / NCIMB 2260 / Gabara) (Halobacterium pharaonis).